The primary structure comprises 315 residues: Ribonuclease HII (315 aa).

The RNase H type-2 domain occupies 78-267 (TLVAGVDEAG…VREALGLAPL (190 aa)). A divalent metal cation is bound by residues Asp84, Glu85, and Asp176. The tract at residues 273-292 (APPPESAAEPGGEGAIAGIA) is disordered. The span at 278 to 292 (SAAEPGGEGAIAGIA) shows a compositional bias: low complexity.

Belongs to the RNase HII family. It depends on Mn(2+) as a cofactor. The cofactor is Mg(2+).

The protein localises to the cytoplasm. It carries out the reaction Endonucleolytic cleavage to 5'-phosphomonoester.. Functionally, endonuclease that specifically degrades the RNA of RNA-DNA hybrids. The polypeptide is Ribonuclease HII (Anaeromyxobacter sp. (strain Fw109-5)).